The sequence spans 760 residues: Metal transporter cnnm-2 (760 aa).

A signal peptide spans 1-21; the sequence is MIIKVFLRLLLLCAHIVCIDG. At 22–153 the chain is on the extracellular side; it reads KLEIRPVVSG…ETFMPVWAQC (132 aa). N-linked (GlcNAc...) asparagine glycosylation is present at Asn88. The CNNM transmembrane domain maps to 145-323; it reads TFMPVWAQCA…MENDACDIDL (179 aa). A helical transmembrane segment spans residues 154–174; that stretch reads AILCLLFSISALCSGLTLGLM. The Cytoplasmic portion of the chain corresponds to 175–208; that stretch reads ALTPQELSILMKSGSQREKKHAAAIYPIRCHGNR. Residues 209 to 229 form a helical membrane-spanning segment; that stretch reads LLCTVIIMNVIVNTGITLLFD. Residue Asp230 is a topological domain, extracellular. A helical membrane pass occupies residues 231 to 251; it reads LAEGLIAFVASTVGIVVFGEI. Residues 252-261 are Cytoplasmic-facing; sequence LPQSICVKYG. The chain crosses the membrane as a helical span at residues 262–282; it reads LAVGANTIFITKFFMFLLFPI. Residues 283-760 lie on the Extracellular side of the membrane; it reads TWPLGKILDK…SVEELKPLME (478 aa). Asn302 and Asn403 each carry an N-linked (GlcNAc...) asparagine glycan. CBS domains are found at residues 344-406 and 442-512; these read MTDI…NITV and MVAK…ITDE. N-linked (GlcNAc...) asparagine glycosylation is found at Asn528, Asn592, and Asn667. Residues 708–734 form a disordered region; the sequence is DDFGSPTRKASILDSSPNSRKRSSTSV.

It belongs to the ACDP family.

It is found in the cell membrane. Its function is as follows. Probable metal transporter. Probably acts redundantly with the other metal transport proteins cnnm-1, cnnm-3, cnnm-4 and cnnm-5 to regulate Mg(2+) homeostasis. The sequence is that of Metal transporter cnnm-2 from Caenorhabditis elegans.